The sequence spans 339 residues: Holliday junction branch migration complex subunit RuvB (339 aa).

Residues 1-180 (MTRTITPDMT…FGVISRLEFY (180 aa)) form a large ATPase domain (RuvB-L) region. ATP-binding positions include Leu-19, Arg-20, Gly-61, Lys-64, Thr-65, Thr-66, 127–129 (EDF), Arg-170, Tyr-180, and Arg-217. Thr-65 contributes to the Mg(2+) binding site. A small ATPAse domain (RuvB-S) region spans residues 181–251 (TIEELAFIIT…VVQDALALLE (71 aa)). The tract at residues 254-339 (HMGFDYMDRM…EPPQGKLFQD (86 aa)) is head domain (RuvB-H). Arg-309 and Arg-314 together coordinate DNA.

Belongs to the RuvB family. As to quaternary structure, homohexamer. Forms an RuvA(8)-RuvB(12)-Holliday junction (HJ) complex. HJ DNA is sandwiched between 2 RuvA tetramers; dsDNA enters through RuvA and exits via RuvB. An RuvB hexamer assembles on each DNA strand where it exits the tetramer. Each RuvB hexamer is contacted by two RuvA subunits (via domain III) on 2 adjacent RuvB subunits; this complex drives branch migration. In the full resolvosome a probable DNA-RuvA(4)-RuvB(12)-RuvC(2) complex forms which resolves the HJ.

The protein localises to the cytoplasm. The catalysed reaction is ATP + H2O = ADP + phosphate + H(+). Its function is as follows. The RuvA-RuvB-RuvC complex processes Holliday junction (HJ) DNA during genetic recombination and DNA repair, while the RuvA-RuvB complex plays an important role in the rescue of blocked DNA replication forks via replication fork reversal (RFR). RuvA specifically binds to HJ cruciform DNA, conferring on it an open structure. The RuvB hexamer acts as an ATP-dependent pump, pulling dsDNA into and through the RuvAB complex. RuvB forms 2 homohexamers on either side of HJ DNA bound by 1 or 2 RuvA tetramers; 4 subunits per hexamer contact DNA at a time. Coordinated motions by a converter formed by DNA-disengaged RuvB subunits stimulates ATP hydrolysis and nucleotide exchange. Immobilization of the converter enables RuvB to convert the ATP-contained energy into a lever motion, pulling 2 nucleotides of DNA out of the RuvA tetramer per ATP hydrolyzed, thus driving DNA branch migration. The RuvB motors rotate together with the DNA substrate, which together with the progressing nucleotide cycle form the mechanistic basis for DNA recombination by continuous HJ branch migration. Branch migration allows RuvC to scan DNA until it finds its consensus sequence, where it cleaves and resolves cruciform DNA. In Geotalea daltonii (strain DSM 22248 / JCM 15807 / FRC-32) (Geobacter daltonii), this protein is Holliday junction branch migration complex subunit RuvB.